We begin with the raw amino-acid sequence, 308 residues long: L-lactate dehydrogenase 2 (308 aa).

NAD(+) is bound by residues V13, D34, R39, Y64, and 78 to 79 (GV). Substrate is bound at residue R87. T100 lines the NAD(+) pocket. Residue 119-122 (NPVD) participates in substrate binding. An NAD(+)-binding site is contributed by T142. Residue 147 to 150 (DSMR) participates in substrate binding. H174 (proton acceptor) is an active-site residue. T224 contacts substrate.

This sequence belongs to the LDH/MDH superfamily. LDH family. In terms of assembly, homotetramer.

The protein localises to the cytoplasm. It carries out the reaction (S)-lactate + NAD(+) = pyruvate + NADH + H(+). The protein operates within fermentation; pyruvate fermentation to lactate; (S)-lactate from pyruvate: step 1/1. In terms of biological role, catalyzes the conversion of lactate to pyruvate. This is L-lactate dehydrogenase 2 from Lactobacillus acidophilus (strain ATCC 700396 / NCK56 / N2 / NCFM).